Reading from the N-terminus, the 380-residue chain is Cytochrome b (380 aa).

Transmembrane regions (helical) follow at residues 34–54, 78–99, 114–134, and 179–199; these read FGSLLGLCLITQILTGLFLAM, WLLRNVHANGASLFFICMYCHI, WNVGVILFLVTVLTAFVGYVL, and FFAFHFLFPFIIAALAIIDLV. Heme b contacts are provided by histidine 84 and histidine 98. Histidine 183 is a binding site for heme b. Histidine 202 is a binding site for a ubiquinone. 4 helical membrane passes run 227-247, 289-309, 321-341, and 348-369; these read TKDTVGFIALIAALFVLALLF, LGGVIALVAAILVLFLMPLLN, LSQATFWILVATFFVLTWIGS, and FVLIGQIASLLYFSLFIFGFPL.

This sequence belongs to the cytochrome b family. In terms of assembly, the main subunits of complex b-c1 are: cytochrome b, cytochrome c1 and the Rieske protein. Heme b is required as a cofactor.

It is found in the mitochondrion inner membrane. Functionally, component of the ubiquinol-cytochrome c reductase complex (complex III or cytochrome b-c1 complex) that is part of the mitochondrial respiratory chain. The b-c1 complex mediates electron transfer from ubiquinol to cytochrome c. Contributes to the generation of a proton gradient across the mitochondrial membrane that is then used for ATP synthesis. The sequence is that of Cytochrome b (MT-CYB) from Paracentrotus lividus (Common sea urchin).